The primary structure comprises 31 residues: Photosystem II reaction center protein T (31 aa).

Residues S3 to F23 traverse the membrane as a helical segment.

Belongs to the PsbT family. In terms of assembly, PSII is composed of 1 copy each of membrane proteins PsbA, PsbB, PsbC, PsbD, PsbE, PsbF, PsbH, PsbI, PsbJ, PsbK, PsbL, PsbM, PsbT, PsbX, PsbY, PsbZ, Psb30/Ycf12, peripheral proteins PsbO, CyanoQ (PsbQ), PsbU, PsbV and a large number of cofactors. It forms dimeric complexes.

The protein localises to the cellular thylakoid membrane. In terms of biological role, found at the monomer-monomer interface of the photosystem II (PS II) dimer, plays a role in assembly and dimerization of PSII. PSII is a light-driven water plastoquinone oxidoreductase, using light energy to abstract electrons from H(2)O, generating a proton gradient subsequently used for ATP formation. The polypeptide is Photosystem II reaction center protein T (Synechococcus sp. (strain WH7803)).